The following is a 570-amino-acid chain: Fibropellin-3 (570 aa).

The signal sequence occupies residues 1 to 17; sequence MKVSLLAVLLLSIVAAT. The EGF-like 1 domain occupies 18 to 55; sequence YGQGECGSNPCENGSVCRDGEGTYICECQMGYDGQNCD. Disulfide bonds link C23-C34, C28-C43, C45-C54, and C62-C88. Residue N30 is glycosylated (N-linked (GlcNAc...) asparagine). The CUB domain occupies 62 to 175; the sequence is CGYNIFESTG…RKGFRITFSS (114 aa). N-linked (GlcNAc...) asparagine glycosylation is present at N136. The region spanning 176-212 is the EGF-like 2; calcium-binding domain; that stretch reads DGDDCTPNPCLNGATCVDQVNDYQCICAPGFTGDNCE. 22 cysteine pairs are disulfide-bonded: C180/C191, C185/C200, C202/C211, C218/C229, C223/C238, C240/C249, C256/C267, C261/C276, C278/C287, C294/C305, C299/C314, C316/C325, C332/C343, C337/C352, C354/C363, C370/C381, C375/C390, C392/C401, C408/C419, C413/C428, C430/C439, and C445/C521. Residues 214–250 form the EGF-like 3; calcium-binding domain; that stretch reads DIDECASAPCRNGGACVDQVNGYTCNCIPGFNGVNCE. Residues 252 to 288 form the EGF-like 4; calcium-binding domain; it reads NINECASIPCLNGGICVDGINQFACTCLPGYTGILCE. In terms of domain architecture, EGF-like 5; calcium-binding spans 290 to 326; that stretch reads DINECASSPCQNGGSCTDAVNRYTCDCRAGFTGSNCE. Residues 328 to 364 form the EGF-like 6; calcium-binding domain; it reads NINECASSPCLNGGSCLDGVDGYVCQCLPNYTGTHCE. N357 carries an N-linked (GlcNAc...) asparagine glycan. The 37-residue stretch at 366–402 folds into the EGF-like 7 domain; it reads SLDACASLPCQNGGVCTNVGGDYVCECLPGYTGINCE. Positions 404 to 440 constitute an EGF-like 8; calcium-binding domain; it reads DINECASLPCQNGGECINGIAMYICQCRQGYAGVNCE. In terms of domain architecture, Avidin-like spans 443–562; sequence GFCDLEGVWF…GQDKWTRYEQ (120 aa).

As to quaternary structure, homotetramer.

Its subcellular location is the secreted. The protein localises to the extracellular space. Forms the apical lamina, a component of the extracellular matrix. In Strongylocentrotus purpuratus (Purple sea urchin), this protein is Fibropellin-3 (EGF3).